Reading from the N-terminus, the 487-residue chain is Bifunctional protein HldE (487 aa).

The tract at residues 1 to 326 (MERREVESFF…QEIVAEVGHG (326 aa)) is ribokinase. 205-208 (NRKE) is an ATP binding site. Aspartate 275 is an active-site residue. A cytidylyltransferase region spans residues 356-487 (FTNGCFDLLH…RIIEKILSSY (132 aa)).

The protein in the N-terminal section; belongs to the carbohydrate kinase PfkB family. This sequence in the C-terminal section; belongs to the cytidylyltransferase family. Homodimer.

It carries out the reaction D-glycero-beta-D-manno-heptose 7-phosphate + ATP = D-glycero-beta-D-manno-heptose 1,7-bisphosphate + ADP + H(+). The enzyme catalyses D-glycero-beta-D-manno-heptose 1-phosphate + ATP + H(+) = ADP-D-glycero-beta-D-manno-heptose + diphosphate. Its pathway is nucleotide-sugar biosynthesis; ADP-L-glycero-beta-D-manno-heptose biosynthesis; ADP-L-glycero-beta-D-manno-heptose from D-glycero-beta-D-manno-heptose 7-phosphate: step 1/4. It functions in the pathway nucleotide-sugar biosynthesis; ADP-L-glycero-beta-D-manno-heptose biosynthesis; ADP-L-glycero-beta-D-manno-heptose from D-glycero-beta-D-manno-heptose 7-phosphate: step 3/4. In terms of biological role, catalyzes the phosphorylation of D-glycero-D-manno-heptose 7-phosphate at the C-1 position to selectively form D-glycero-beta-D-manno-heptose-1,7-bisphosphate. Functionally, catalyzes the ADP transfer from ATP to D-glycero-beta-D-manno-heptose 1-phosphate, yielding ADP-D-glycero-beta-D-manno-heptose. This is Bifunctional protein HldE from Citrifermentans bemidjiense (strain ATCC BAA-1014 / DSM 16622 / JCM 12645 / Bem) (Geobacter bemidjiensis).